Here is an 829-residue protein sequence, read N- to C-terminus: Telomere length regulation protein TEL2 homolog (829 aa).

Disordered regions lie at residues 446 to 493 (SADF…DDLV) and 620 to 641 (SEKP…PHSI). The segment covering 456–466 (SSPSKSPLSSP) has biased composition (low complexity). Positions 467–480 (EVREKSKVKVKADQ) are enriched in basic and acidic residues. Over residues 482-493 (SDSDLDSDDDLV) the composition is skewed to acidic residues. Positions 629-641 (AESGSVNTDPHSI) are enriched in polar residues.

The protein belongs to the TEL2 family.

Its subcellular location is the cytoplasm. The protein localises to the membrane. It localises to the nucleus. It is found in the chromosome. The protein resides in the telomere. Its function is as follows. Regulator of the DNA damage response (DDR). Part of the TTT complex that is required to stabilize protein levels of the phosphatidylinositol 3-kinase-related protein kinase (PIKK) family proteins. Promotes assembly, stabilizes and maintains the activity of TORC complexes, which regulate cell growth and survival in response to nutrient and hormonal signals. May be involved in telomere length regulation. The polypeptide is Telomere length regulation protein TEL2 homolog (telo2) (Xenopus tropicalis (Western clawed frog)).